Reading from the N-terminus, the 158-residue chain is Phosphopantetheine adenylyltransferase (158 aa).

T10 is a substrate binding site. ATP contacts are provided by residues 10-11 (TF) and H18. Residues K42, L74, and R88 each coordinate substrate. Residues 89–91 (GIR), E99, and 124–130 (WRYLSST) each bind ATP.

It belongs to the bacterial CoaD family. As to quaternary structure, homohexamer. The cofactor is Mg(2+).

It is found in the cytoplasm. It catalyses the reaction (R)-4'-phosphopantetheine + ATP + H(+) = 3'-dephospho-CoA + diphosphate. It participates in cofactor biosynthesis; coenzyme A biosynthesis; CoA from (R)-pantothenate: step 4/5. Functionally, reversibly transfers an adenylyl group from ATP to 4'-phosphopantetheine, yielding dephospho-CoA (dPCoA) and pyrophosphate. This chain is Phosphopantetheine adenylyltransferase, found in Actinobacillus pleuropneumoniae serotype 5b (strain L20).